We begin with the raw amino-acid sequence, 128 residues long: Large ribosomal subunit protein bL19 (128 aa).

Belongs to the bacterial ribosomal protein bL19 family.

This protein is located at the 30S-50S ribosomal subunit interface and may play a role in the structure and function of the aminoacyl-tRNA binding site. The protein is Large ribosomal subunit protein bL19 of Mesoplasma florum (strain ATCC 33453 / NBRC 100688 / NCTC 11704 / L1) (Acholeplasma florum).